Consider the following 305-residue polypeptide: Protoheme IX farnesyltransferase (305 aa).

The next 9 helical transmembrane spans lie at 28–48 (IIEL…QGVP), 52–72 (LVLL…ALNM), 101–121 (LAFG…TVNW), 122–142 (LSAW…TMIL), 149–169 (NIVW…SSVT), 174–194 (WAPV…YWPL), 218–238 (VVAR…LLLT), 240–260 (LGYT…FWLW), and 283–303 (LFHW…VDPF).

The protein belongs to the UbiA prenyltransferase family. Protoheme IX farnesyltransferase subfamily.

The protein resides in the cell membrane. The catalysed reaction is heme b + (2E,6E)-farnesyl diphosphate + H2O = Fe(II)-heme o + diphosphate. The protein operates within porphyrin-containing compound metabolism; heme O biosynthesis; heme O from protoheme: step 1/1. Converts heme B (protoheme IX) to heme O by substitution of the vinyl group on carbon 2 of heme B porphyrin ring with a hydroxyethyl farnesyl side group. In Streptomyces avermitilis (strain ATCC 31267 / DSM 46492 / JCM 5070 / NBRC 14893 / NCIMB 12804 / NRRL 8165 / MA-4680), this protein is Protoheme IX farnesyltransferase.